A 350-amino-acid chain; its full sequence is GTPase Obg (350 aa).

Residues 1–158 (MFIDSVKITL…RLVRLELKLI (158 aa)) form the Obg domain. Residues 159 to 339 (ADVGLVGFPN…LKFMLLEEIK (181 aa)) enclose the OBG-type G domain. GTP contacts are provided by residues 165-172 (GFPNVGKS), 190-194 (FTTLT), 212-215 (DIPG), 280-283 (SKSD), and 320-322 (SSL). Mg(2+) is bound by residues Ser172 and Thr192.

Belongs to the TRAFAC class OBG-HflX-like GTPase superfamily. OBG GTPase family. Monomer. Mg(2+) is required as a cofactor.

Its subcellular location is the cytoplasm. An essential GTPase which binds GTP, GDP and possibly (p)ppGpp with moderate affinity, with high nucleotide exchange rates and a fairly low GTP hydrolysis rate. Plays a role in control of the cell cycle, stress response, ribosome biogenesis and in those bacteria that undergo differentiation, in morphogenesis control. In Campylobacter jejuni subsp. jejuni serotype O:2 (strain ATCC 700819 / NCTC 11168), this protein is GTPase Obg.